The primary structure comprises 845 residues: Disintegrin and metalloproteinase domain-containing protein 9 (845 aa).

A signal peptide spans 1 to 29 (MGPRALSPLASLRLRWLLACGLLGPVLEA). The Extracellular portion of the chain corresponds to 30-697 (GRPDLEQTVH…YNAKSTALRD (668 aa)). N144, N154, and N231 each carry an N-linked (GlcNAc...) asparagine glycan. Positions 212–406 (RYVELFIVVD…KGGSCLLNIP (195 aa)) constitute a Peptidase M12B domain. Cystine bridges form between C322-C401, C363-C385, C365-C370, and C473-C493. H347 contacts Zn(2+). Residue E348 is part of the active site. Zn(2+)-binding residues include H351 and H357. 3 N-linked (GlcNAc...) asparagine glycosylation sites follow: N381, N487, and N636. The Disintegrin domain maps to 414–501 (APSCGNKLVD…FCPPDVFIQN (88 aa)). Disulfide bonds link C644/C656, C650/C662, and C664/C673. Residues 644-698 (CDIQGKCHGHGVCNSNKNCHCEDGWAPPHCDTKGYGGSVDSGPTYNAKSTALRDG) form the EGF-like domain. Residues 698-718 (GLLVFFFLIVPLVAAAIFLFI) form a helical membrane-spanning segment. Residues 719-845 (KRDELRKTFR…PAPPLYSSLT (127 aa)) lie on the Cytoplasmic side of the membrane. A disordered region spans residues 729 to 845 (KKRSQMSDGR…PAPPLYSSLT (117 aa)). Residues 734 to 745 (MSDGRNQANVSR) show a composition bias toward polar residues. Positions 783 to 794 (PGGPGVSRPPPG) are enriched in pro residues.

Interacts with SH3GL2 and SNX9 through its cytoplasmic tail. Interacts with ITGA6. It depends on Zn(2+) as a cofactor. In terms of processing, proteolytically cleaved in the trans-Golgi network before it reaches the plasma membrane to generate a mature protein. The removal of the pro-domain occurs via cleavage at two different sites. Processed most likely by a pro-protein convertase such as furin, at the boundary between the pro-domain and the catalytic domain. An additional upstream cleavage pro-protein convertase site (Arg-56/Glu-57) has an important role in the activation of ADAM9. Post-translationally, phosphorylation is induced in vitro by phorbol-12-myristate-13-acetate (PMA).

The protein localises to the cell membrane. Synthesized as an inactive form which is proteolytically cleaved to generate an active enzyme. Processing at the upstream site is particularly important for activation of the proenzyme, whereas processing at the boundary between the pro-domain and the catalytic domain does not appear to be essential. Inhibited by hydroxamic acid-based inhibitors. Metalloprotease that cleaves and releases a number of molecules with important roles in tumorigenesis and angiogenesis, such as TEK, KDR, EPHB4, CD40, VCAM1 and CDH5. May mediate cell-cell, cell-matrix interactions and regulate the motility of cells via interactions with integrins. The chain is Disintegrin and metalloproteinase domain-containing protein 9 from Mus musculus (Mouse).